Consider the following 586-residue polypeptide: Protein HOL1 (586 aa).

At 1–66 (MDKYTNRDHP…NWSSWRKLAH (66 aa)) the chain is on the extracellular side. Residues 67–87 (FGLMAFITAFTAATSNDAGAA) form a helical membrane-spanning segment. Residues 88–103 (QDSLNEIYGISYDSMN) are Cytoplasmic-facing. A helical transmembrane segment spans residues 104–124 (TGAGVLFLGIGWSTLFLAPFA). Over 125-130 (NLYGRK) the chain is Extracellular. Residues 131-151 (ITYIVCTTLGLFGALWFALAK) traverse the membrane as a helical segment. At 152–189 (RTSDTIWSQLFVGISESCAEAQVQLSLSDIFFQHQLGS) the chain is on the cytoplasmic side. A helical transmembrane segment spans residues 190 to 210 (VLTVYIMCTSIGTFLGPLIAG). The Extracellular segment spans residues 211 to 219 (YISAFTNFR). Residues 220 to 240 (WVGWVAVIISGGLLITIIFGC) form a helical membrane-spanning segment. At 241 to 362 (EETYFDRGQY…YFKYLKINLR (122 aa)) the chain is on the cytoplasmic side. A helical membrane pass occupies residues 363-383 (MFLFPPVWLSGMFWGIQDVFL). Residues 384–413 (TFYLTTQESAYYEPPWNYSDFGVAIMNVPT) are Extracellular-facing. Residues 414 to 434 (LIGAVIGCICAGIVSDYFVLW) form a helical membrane-spanning segment. At 435 to 448 (MARHNRGILEAEFR) the chain is on the cytoplasmic side. Residues 449–469 (LYFSIATAIIGPAGLLMFGIG) form a helical membrane-spanning segment. Residues 470–477 (TARQWPWQ) lie on the Extracellular side of the membrane. A helical membrane pass occupies residues 478–498 (AIYVGLGFVGFAWGCSGDIAM). Topologically, residues 499 to 508 (AYLMDCYPDM) are cytoplasmic. Residues 509–529 (VLEGMVCTAIINNTISCIFTF) form a helical membrane-spanning segment. Topologically, residues 530-544 (TCSDWLAASGTENTY) are extracellular. Residues 545–565 (IALAVINFGITAFALPMYYYG) traverse the membrane as a helical segment. Topologically, residues 566–586 (KRIRLWTKRWYLQSVNLRDGV) are cytoplasmic.

The protein resides in the membrane. In terms of biological role, seems to be involved in the uptake of several cations and of histidinol. The protein is Protein HOL1 (HOL1) of Saccharomyces cerevisiae (strain ATCC 204508 / S288c) (Baker's yeast).